The chain runs to 647 residues: Chaperone protein DnaK (647 aa).

Threonine 198 is modified (phosphothreonine; by autocatalysis). Basic and acidic residues-rich tracts occupy residues 514 to 529 (AEAN…ESVD), 540 to 557 (STEK…DADK), and 600 to 622 (SQEK…KDDN). 2 disordered regions span residues 514–557 (AEAN…DADK) and 596–647 (AIYK…EKSA). Acidic residues predominate over residues 623 to 632 (VVDADFEEVK). The span at 633-647 (EESKEGKEEDKEKSA) shows a compositional bias: basic and acidic residues.

This sequence belongs to the heat shock protein 70 family.

Functionally, acts as a chaperone. The polypeptide is Chaperone protein DnaK (Pelagibacter ubique (strain HTCC1062)).